The primary structure comprises 364 residues: tRNA 2-selenouridine synthase (364 aa).

The Rhodanese domain maps to 12-135 (FLNDRPMMDT…MRTFLLDTTE (124 aa)). Cys-95 serves as the catalytic S-selanylcysteine intermediate.

This sequence belongs to the SelU family. As to quaternary structure, monomer.

The catalysed reaction is 5-methylaminomethyl-2-thiouridine(34) in tRNA + selenophosphate + (2E)-geranyl diphosphate + H2O + H(+) = 5-methylaminomethyl-2-selenouridine(34) in tRNA + (2E)-thiogeraniol + phosphate + diphosphate. It catalyses the reaction 5-methylaminomethyl-2-thiouridine(34) in tRNA + (2E)-geranyl diphosphate = 5-methylaminomethyl-S-(2E)-geranyl-thiouridine(34) in tRNA + diphosphate. It carries out the reaction 5-methylaminomethyl-S-(2E)-geranyl-thiouridine(34) in tRNA + selenophosphate + H(+) = 5-methylaminomethyl-2-(Se-phospho)selenouridine(34) in tRNA + (2E)-thiogeraniol. The enzyme catalyses 5-methylaminomethyl-2-(Se-phospho)selenouridine(34) in tRNA + H2O = 5-methylaminomethyl-2-selenouridine(34) in tRNA + phosphate. Its function is as follows. Involved in the post-transcriptional modification of the uridine at the wobble position (U34) of tRNA(Lys), tRNA(Glu) and tRNA(Gln). Catalyzes the conversion of 2-thiouridine (S2U-RNA) to 2-selenouridine (Se2U-RNA). Acts in a two-step process involving geranylation of 2-thiouridine (S2U) to S-geranyl-2-thiouridine (geS2U) and subsequent selenation of the latter derivative to 2-selenouridine (Se2U) in the tRNA chain. This Pseudomonas fluorescens (strain ATCC BAA-477 / NRRL B-23932 / Pf-5) protein is tRNA 2-selenouridine synthase.